The sequence spans 498 residues: MAELSTENLAQGQTTTEQTSEFASLLLQEFKPKTERAREAVETAVRTLAEHALEQTSLISNDAIKSIESIIAALDAKLTAQVNLIMHHADFQQLESAWRGLHYLVNNTETDEQLKIRVLNISKPELHKTLKKFKGTTWDQSPIFKKLYEEEYGQFGGEPYGCLVGDYYFDQSPPDVELLGEMAKISAAMHAPFISAASPTVMGMGSWQELSNPRDLTKIFTTPEYAGWRSLRESEDSRYIGLTMPRFLARLPYGAKTDPVEEFAFEEETDGADSSKYAWANSAYAMAVNINRSFKLYGWCSRIRGVESGGEVQGLPAHTFPTDDGGVDMKCPTEIAISDRREAELAKNGFMPLLHKKNTDFAAFIGAQSLQKPAEYDDPDATANANLAARLPYLFATCRFAHYLKCIVRDKIGSFKEKDEMQRWLQDWILNYVDGDPAHSTETTKAQHPLAAAEVVVEEVEGNPGYYNSKFFLRPHYQLEGLTVSLRLVSKLPSAKEA.

Forms a heterodimer with TssB1. Heterodimers assemble to form the sheath of the T6SS machinery. Interacts with TssA1.

Functionally, core component of the H1 type VI (H1-T6SS) secretion system that plays a role in the release of toxins targeting both eukaryotic and prokaryotic species. Forms the sheath of the structure by assembling into tubules together with TssB1 resulting in the stacking of cogwheel-like structures showing predominantly a 12-fold symmetry. The sheath contracts to provide the energy needed for effector delivery. In Pseudomonas aeruginosa (strain ATCC 15692 / DSM 22644 / CIP 104116 / JCM 14847 / LMG 12228 / 1C / PRS 101 / PAO1), this protein is Type VI secretion system sheath protein TssC1.